The following is a 1185-amino-acid chain: Zinc finger SWIM domain-containing protein 5 (1185 aa).

A compositionally biased stretch (basic and acidic residues) spans 1-10; it reads MADGGEREEL. 2 disordered regions span residues 1–45 and 123–153; these read MADG…GGAG and AGAA…GSAP. Residues 219–256 form an SWIM-type zinc finger; that stretch reads YKVAISFDRCKITSVTCGCGNKDIFYCAHVVALSLYRI.

The chain is Zinc finger SWIM domain-containing protein 5 (ZSWIM5) from Homo sapiens (Human).